We begin with the raw amino-acid sequence, 42 residues long: Photosystem I reaction center subunit IX (42 aa).

A helical membrane pass occupies residues 7-27; sequence YLSTAPVLATLWFGFLAGLLI.

This sequence belongs to the PsaJ family.

Its subcellular location is the plastid. It localises to the chloroplast thylakoid membrane. In terms of biological role, may help in the organization of the PsaE and PsaF subunits. This chain is Photosystem I reaction center subunit IX, found in Anthoceros angustus (Hornwort).